Reading from the N-terminus, the 440-residue chain is Lipopolysaccharide-processing protein LpsZ (440 aa).

It to E.coli capsule polysaccharide export protein KpsC.

It is found in the cytoplasm. In terms of biological role, involved in the invasion of nitrogen fixation nodules. May be involved in the biosynthesis of lipopolysaccharides as an enzyme or a regulatory protein. The sequence is that of Lipopolysaccharide-processing protein LpsZ (lpsZ) from Rhizobium meliloti (Ensifer meliloti).